The following is a 253-amino-acid chain: uncharacterized protein (253 aa).

The N-terminal stretch at 1–25 (MRKKKFLSKVSFGSLFLLCGTVLSA) is a signal peptide. Residue cysteine 26 is the site of N-palmitoyl cysteine attachment. A lipid anchor (S-diacylglycerol cysteine) is attached at cysteine 26.

The protein belongs to the MG439/MG440 family.

Its subcellular location is the cell membrane. This is an uncharacterized protein from Mycoplasma pneumoniae (strain ATCC 29342 / M129 / Subtype 1) (Mycoplasmoides pneumoniae).